The following is a 436-amino-acid chain: Adenylosuccinate synthetase (436 aa).

GTP contacts are provided by residues Gly12–Lys18 and Gly40–Thr42. Residue Asp13 is the Proton acceptor of the active site. Residues Asp13 and Gly40 each contribute to the Mg(2+) site. IMP-binding positions include Asp13–Lys16, Asn38–His41, Thr128, Arg142, Gln223, Thr238, and Arg302. The active-site Proton donor is the His41. Thr298–Arg304 is a substrate binding site. GTP contacts are provided by residues Arg304, Lys330 to Asp332, and Ser412 to Gly414.

It belongs to the adenylosuccinate synthetase family. As to quaternary structure, homodimer. It depends on Mg(2+) as a cofactor.

It is found in the cytoplasm. It catalyses the reaction IMP + L-aspartate + GTP = N(6)-(1,2-dicarboxyethyl)-AMP + GDP + phosphate + 2 H(+). The protein operates within purine metabolism; AMP biosynthesis via de novo pathway; AMP from IMP: step 1/2. Its function is as follows. Plays an important role in the de novo pathway of purine nucleotide biosynthesis. Catalyzes the first committed step in the biosynthesis of AMP from IMP. The polypeptide is Adenylosuccinate synthetase (Prochlorococcus marinus subsp. pastoris (strain CCMP1986 / NIES-2087 / MED4)).